A 297-amino-acid polypeptide reads, in one-letter code: Mycothiol acetyltransferase (297 aa).

N-acetyltransferase domains follow at residues 7-156 and 153-297; these read VFSD…VTIR and VTIR…PPPH. Residue E38 coordinates 1D-myo-inositol 2-(L-cysteinylamino)-2-deoxy-alpha-D-glucopyranoside. An acetyl-CoA-binding site is contributed by 79 to 81; sequence VVV. 1D-myo-inositol 2-(L-cysteinylamino)-2-deoxy-alpha-D-glucopyranoside-binding residues include E180, K219, and E227. Acetyl-CoA contacts are provided by residues 231 to 233 and 238 to 244; these read VGV and QGLGLGR. Y265 is a binding site for 1D-myo-inositol 2-(L-cysteinylamino)-2-deoxy-alpha-D-glucopyranoside. 270–275 is an acetyl-CoA binding site; sequence NRPALR.

The protein belongs to the acetyltransferase family. MshD subfamily. In terms of assembly, monomer.

It catalyses the reaction 1D-myo-inositol 2-(L-cysteinylamino)-2-deoxy-alpha-D-glucopyranoside + acetyl-CoA = mycothiol + CoA + H(+). Its function is as follows. Catalyzes the transfer of acetyl from acetyl-CoA to desacetylmycothiol (Cys-GlcN-Ins) to form mycothiol. The polypeptide is Mycothiol acetyltransferase (Thermomonospora curvata (strain ATCC 19995 / DSM 43183 / JCM 3096 / KCTC 9072 / NBRC 15933 / NCIMB 10081 / Henssen B9)).